The chain runs to 451 residues: Chaperone SurA (451 aa).

The signal sequence occupies residues 1-26 (MKKIIPTNLFKLISILFILTPFFAWS). PpiC domains follow at residues 179–280 (DVEY…QLQG) and 290–388 (KQYH…FLDG).

It localises to the periplasm. It carries out the reaction [protein]-peptidylproline (omega=180) = [protein]-peptidylproline (omega=0). In terms of biological role, chaperone involved in the correct folding and assembly of outer membrane proteins. Recognizes specific patterns of aromatic residues and the orientation of their side chains, which are found more frequently in integral outer membrane proteins. May act in both early periplasmic and late outer membrane-associated steps of protein maturation. This chain is Chaperone SurA, found in Hydrogenovibrio crunogenus (strain DSM 25203 / XCL-2) (Thiomicrospira crunogena).